A 187-amino-acid polypeptide reads, in one-letter code: UPF0301 protein SO_3346 (187 aa).

This sequence belongs to the UPF0301 (AlgH) family.

This chain is UPF0301 protein SO_3346, found in Shewanella oneidensis (strain ATCC 700550 / JCM 31522 / CIP 106686 / LMG 19005 / NCIMB 14063 / MR-1).